Consider the following 201-residue polypeptide: Holliday junction resolvase RecU (201 aa).

A disordered region spans residues methionine 1–proline 26. Mg(2+) contacts are provided by threonine 87, aspartate 89, glutamate 102, and glutamine 121.

Belongs to the RecU family. The cofactor is Mg(2+).

It is found in the cytoplasm. It carries out the reaction Endonucleolytic cleavage at a junction such as a reciprocal single-stranded crossover between two homologous DNA duplexes (Holliday junction).. In terms of biological role, endonuclease that resolves Holliday junction intermediates in genetic recombination. Cleaves mobile four-strand junctions by introducing symmetrical nicks in paired strands. Promotes annealing of linear ssDNA with homologous dsDNA. Required for DNA repair, homologous recombination and chromosome segregation. This chain is Holliday junction resolvase RecU, found in Listeria monocytogenes serotype 4a (strain HCC23).